Reading from the N-terminus, the 852-residue chain is Elongation factor 2 (852 aa).

Residues 17-356 form the tr-type G domain; that stretch reads RNIRNMSVIA…MIAFHLPSPV (340 aa). Residue 26–33 participates in GTP binding; it reads AHVDHGKS. Phosphothreonine occurs at positions 57 and 59. Residues 170-173 and 227-229 each bind GTP; these read NKMD and SGL. Histidine 709 is subject to Diphthamide.

It belongs to the TRAFAC class translation factor GTPase superfamily. Classic translation factor GTPase family. EF-G/EF-2 subfamily. Post-translationally, phosphorylation by EF-2 kinase completely inactivates EF-2. In terms of processing, AMPylated by fic-1.

Its subcellular location is the cytoplasm. It carries out the reaction GTP + H2O = GDP + phosphate + H(+). In terms of biological role, catalyzes the GTP-dependent ribosomal translocation step during translation elongation. During this step, the ribosome changes from the pre-translocational (PRE) to the post-translocational (POST) state as the newly formed A-site-bound peptidyl-tRNA and P-site-bound deacylated tRNA move to the P and E sites, respectively. Catalyzes the coordinated movement of the two tRNA molecules, the mRNA and conformational changes in the ribosome. Involved in the morphogenesis of epidermal tissues. In Caenorhabditis elegans, this protein is Elongation factor 2 (eef-2).